Consider the following 375-residue polypeptide: UDP-N-acetylglucosamine--N-acetylmuramyl-(pentapeptide) pyrophosphoryl-undecaprenol N-acetylglucosamine transferase (375 aa).

Residues 13–15, asparagine 124, arginine 165, serine 193, and glutamine 294 each bind UDP-N-acetyl-alpha-D-glucosamine; that span reads TGG.

This sequence belongs to the glycosyltransferase 28 family. MurG subfamily.

It is found in the cell inner membrane. It carries out the reaction di-trans,octa-cis-undecaprenyl diphospho-N-acetyl-alpha-D-muramoyl-L-alanyl-D-glutamyl-meso-2,6-diaminopimeloyl-D-alanyl-D-alanine + UDP-N-acetyl-alpha-D-glucosamine = di-trans,octa-cis-undecaprenyl diphospho-[N-acetyl-alpha-D-glucosaminyl-(1-&gt;4)]-N-acetyl-alpha-D-muramoyl-L-alanyl-D-glutamyl-meso-2,6-diaminopimeloyl-D-alanyl-D-alanine + UDP + H(+). Its pathway is cell wall biogenesis; peptidoglycan biosynthesis. Functionally, cell wall formation. Catalyzes the transfer of a GlcNAc subunit on undecaprenyl-pyrophosphoryl-MurNAc-pentapeptide (lipid intermediate I) to form undecaprenyl-pyrophosphoryl-MurNAc-(pentapeptide)GlcNAc (lipid intermediate II). The chain is UDP-N-acetylglucosamine--N-acetylmuramyl-(pentapeptide) pyrophosphoryl-undecaprenol N-acetylglucosamine transferase from Brucella anthropi (strain ATCC 49188 / DSM 6882 / CCUG 24695 / JCM 21032 / LMG 3331 / NBRC 15819 / NCTC 12168 / Alc 37) (Ochrobactrum anthropi).